Reading from the N-terminus, the 298-residue chain is 4-hydroxy-tetrahydrodipicolinate synthase (298 aa).

Threonine 48 provides a ligand contact to pyruvate. Catalysis depends on tyrosine 137, which acts as the Proton donor/acceptor. Residue lysine 166 is the Schiff-base intermediate with substrate of the active site. Isoleucine 207 contributes to the pyruvate binding site.

The protein belongs to the DapA family. As to quaternary structure, homotetramer; dimer of dimers.

Its subcellular location is the cytoplasm. It carries out the reaction L-aspartate 4-semialdehyde + pyruvate = (2S,4S)-4-hydroxy-2,3,4,5-tetrahydrodipicolinate + H2O + H(+). Its pathway is amino-acid biosynthesis; L-lysine biosynthesis via DAP pathway; (S)-tetrahydrodipicolinate from L-aspartate: step 3/4. Functionally, catalyzes the condensation of (S)-aspartate-beta-semialdehyde [(S)-ASA] and pyruvate to 4-hydroxy-tetrahydrodipicolinate (HTPA). The sequence is that of 4-hydroxy-tetrahydrodipicolinate synthase from Campylobacter jejuni subsp. jejuni serotype O:2 (strain ATCC 700819 / NCTC 11168).